A 314-amino-acid chain; its full sequence is NF-kappa-B inhibitor alpha (314 aa).

Residues 1–39 (MFQPAGHGQDWAMEGPRDGLKKERLVDDRHDSGLDSMKD) form a disordered region. The segment covering 15-39 (GPRDGLKKERLVDDRHDSGLDSMKD) has biased composition (basic and acidic residues). Lysine 21 is covalently cross-linked (Glycyl lysine isopeptide (Lys-Gly) (interchain with G-Cter in SUMO); alternate). Lysine 21 is covalently cross-linked (Glycyl lysine isopeptide (Lys-Gly) (interchain with G-Cter in ubiquitin); alternate). Lysine 22 is covalently cross-linked (Glycyl lysine isopeptide (Lys-Gly) (interchain with G-Cter in ubiquitin)). Positions 30 to 36 (HDSGLDS) match the Destruction motif motif. A Phosphoserine; by IKKA and IKKB modification is found at serine 32. Serine 36 is subject to Phosphoserine; by IKKA, IKKB, IKKE and TBK1. Tyrosine 42 carries the phosphotyrosine; by Tyr-kinases modification. Residues 45–54 (MVKELREIRL) carry the Nuclear export signal motif. The short motif at 110–120 (LQQTPLHLAVI) is the Nuclear import signal element. ANK repeat units lie at residues 110 to 139 (LQQTPLHLAVITNQPGIAEALLKAGCDPEL), 143 to 172 (RGNTPLHLACEQGCLASVAVLTQTCTPQHL), 182 to 211 (NGHTCLHLASIHGYLGIVEHLVTLGADVNA), and 216 to 245 (NGRTALHLAVDLQNPDLVSLLLKCGADVNR). (3S)-3-hydroxyasparagine; by HIF1AN occurs at positions 210 and 244. 2 positions are modified to phosphoserine; by CK2: serine 283 and serine 288. Threonine 291 carries the phosphothreonine; by CK2 modification. Serine 293 carries the post-translational modification Phosphoserine; by CK2. Position 296 is a phosphothreonine (threonine 296).

This sequence belongs to the NF-kappa-B inhibitor family. In terms of assembly, interacts with RELA; the interaction requires the nuclear import signal. Part of a 70-90 kDa complex at least consisting of CHUK, IKBKB, NFKBIA, RELA, ELP1 and MAP3K14. Interacts with NKIRAS1 and NKIRAS2. Interacts with RWDD3; the interaction enhances sumoylation. Interacts with PRMT2. Interacts with PRKACA in platelets; this interaction is disrupted by thrombin and collagen. Interacts with MEFV. Interacts with DDRGK1; positively regulates NFKBIA phosphorylation and degradation. Interacts with HNRNPA2B1; the interaction may be mediated by the RRM2 domain of HNRNPA2B1, and HNRNPA2B1 may interact simultaneously with FAM76B and either NFKBIA or NFKBIE to form a complex. In terms of processing, phosphorylated at Ser-32 and Ser-36 by IKKA/CHUK and IKKB/IKBKB; disables inhibition of NF-kappa-B DNA-binding activity. Phosphorylation at positions 32 and 36 is prerequisite to recognition by the SCF(FBXW11) and SCF(BTRC) complexes, leading to polyubiquitination and subsequent degradation. Polyubiquitinated at Lys-21 and/or Lys-22 following phosphorylation at Ser-32 and Ser-36. Monoubiquitinated at Lys-21 and/or Lys-22 by UBE2D3. Ubiquitin chain elongation is then performed by CDC34 in cooperation with the SCF(FBXW11) E3 ligase complex, building ubiquitin chains from the UBE2D3-primed NFKBIA-linked ubiquitin. The resulting polyubiquitination leads to protein degradation. Also ubiquitinated by the SCF(BTRC) complex following stimulus-dependent phosphorylation at Ser-32 and Ser-36. Deubiquitinated by USP38, leading to NF-kappa-B inhibition. Post-translationally, sumoylated; sumoylation requires the presence of the nuclear import signal. Sumoylation blocks ubiquitination and proteasome-mediated degradation of the protein thereby increasing the protein stability. In terms of processing, hydroxylated by HIF1AN.

Its subcellular location is the cytoplasm. It is found in the nucleus. In terms of biological role, inhibits the activity of dimeric NF-kappa-B/REL complexes by trapping REL (RELA/p65 and NFKB1/p50) dimers in the cytoplasm by masking their nuclear localization signals. On cellular stimulation by immune and pro-inflammatory responses, becomes phosphorylated promoting ubiquitination and degradation, enabling the dimeric RELA to translocate to the nucleus and activate transcription. This Rattus norvegicus (Rat) protein is NF-kappa-B inhibitor alpha (Nfkbia).